The chain runs to 473 residues: Azaphilone pigments biosynthesis cluster protein L (473 aa).

The N-terminal stretch at 1-23 (MAELSIASGIVGLLSLGIQVTQS) is a signal peptide. 2 ANK repeats span residues 403–432 (EYGNALQAASSGGHWKVVQMLLDQGADVNA) and 436–465 (RYGNALHAASSRGHKKVVQMLLDHGANVST). An N-linked (GlcNAc...) asparagine glycan is attached at asparagine 462.

Functionally, part of the gene cluster that mediates the biosynthesis of azaphilone pigments (MonAzPs), a complex mixture of compounds with a common azaphilone skeleton very widely used as food colorants. Seems not to play a direct role in the biosynthesis but might have a regulatorx function. In Monascus ruber (Mold), this protein is Azaphilone pigments biosynthesis cluster protein L.